Consider the following 159-residue polypeptide: Regulatory protein RecX (159 aa).

It belongs to the RecX family.

The protein resides in the cytoplasm. Its function is as follows. Modulates RecA activity. The chain is Regulatory protein RecX from Acinetobacter baylyi (strain ATCC 33305 / BD413 / ADP1).